Here is a 297-residue protein sequence, read N- to C-terminus: tRNA pseudouridine synthase B (297 aa).

Asp41 functions as the Nucleophile in the catalytic mechanism.

It belongs to the pseudouridine synthase TruB family. Type 1 subfamily.

The enzyme catalyses uridine(55) in tRNA = pseudouridine(55) in tRNA. Responsible for synthesis of pseudouridine from uracil-55 in the psi GC loop of transfer RNAs. The sequence is that of tRNA pseudouridine synthase B from Synechococcus sp. (strain CC9311).